The sequence spans 218 residues: Pyridoxal 5'-phosphate synthase subunit PdxT (218 aa).

L-glutamine is bound at residue 54-56 (GES). Cys86 acts as the Nucleophile in catalysis. L-glutamine is bound by residues Arg120 and 149–150 (IR). Catalysis depends on charge relay system residues His197 and Glu199.

This sequence belongs to the glutaminase PdxT/SNO family. In terms of assembly, in the presence of PdxS, forms a dodecamer of heterodimers. Only shows activity in the heterodimer.

It carries out the reaction aldehydo-D-ribose 5-phosphate + D-glyceraldehyde 3-phosphate + L-glutamine = pyridoxal 5'-phosphate + L-glutamate + phosphate + 3 H2O + H(+). It catalyses the reaction L-glutamine + H2O = L-glutamate + NH4(+). It participates in cofactor biosynthesis; pyridoxal 5'-phosphate biosynthesis. Its function is as follows. Catalyzes the hydrolysis of glutamine to glutamate and ammonia as part of the biosynthesis of pyridoxal 5'-phosphate. The resulting ammonia molecule is channeled to the active site of PdxS. In Saccharopolyspora erythraea (strain ATCC 11635 / DSM 40517 / JCM 4748 / NBRC 13426 / NCIMB 8594 / NRRL 2338), this protein is Pyridoxal 5'-phosphate synthase subunit PdxT.